We begin with the raw amino-acid sequence, 221 residues long: Probable transaldolase (221 aa).

The Schiff-base intermediate with substrate role is filled by lysine 83.

It belongs to the transaldolase family. Type 3B subfamily.

The protein resides in the cytoplasm. It carries out the reaction D-sedoheptulose 7-phosphate + D-glyceraldehyde 3-phosphate = D-erythrose 4-phosphate + beta-D-fructose 6-phosphate. The protein operates within carbohydrate degradation; pentose phosphate pathway; D-glyceraldehyde 3-phosphate and beta-D-fructose 6-phosphate from D-ribose 5-phosphate and D-xylulose 5-phosphate (non-oxidative stage): step 2/3. Its function is as follows. Transaldolase is important for the balance of metabolites in the pentose-phosphate pathway. This chain is Probable transaldolase, found in Petrotoga mobilis (strain DSM 10674 / SJ95).